The sequence spans 99 residues: Ubiquitin-related modifier 1 (99 aa).

Gly-99 carries the 1-thioglycine modification. Gly-99 participates in a covalent cross-link: Glycyl lysine isopeptide (Gly-Lys) (interchain with K-? in acceptor proteins).

It belongs to the URM1 family. C-terminal thiocarboxylation occurs in 2 steps, it is first acyl-adenylated (-COAMP) via the hesA/moeB/thiF part of UBA4, then thiocarboxylated (-COSH) via the rhodanese domain of UBA4.

Its subcellular location is the cytoplasm. The protein operates within tRNA modification; 5-methoxycarbonylmethyl-2-thiouridine-tRNA biosynthesis. Its function is as follows. Acts as a sulfur carrier required for 2-thiolation of mcm(5)S(2)U at tRNA wobble positions of cytosolic tRNA(Lys), tRNA(Glu) and tRNA(Gln). Serves as sulfur donor in tRNA 2-thiolation reaction by being thiocarboxylated (-COSH) at its C-terminus by the MOCS3 homolog UBA4. The sulfur is then transferred to tRNA to form 2-thiolation of mcm(5)S(2)U. Prior mcm(5) tRNA modification by the elongator complex is required for 2-thiolation. Also acts as a ubiquitin-like protein (UBL) that is covalently conjugated via an isopeptide bond to lysine residues of target proteins such as AHP1. The thiocarboxylated form serves as substrate for conjugation and oxidative stress specifically induces the formation of UBL-protein conjugates. In Yarrowia lipolytica (strain CLIB 122 / E 150) (Yeast), this protein is Ubiquitin-related modifier 1.